Here is a 415-residue protein sequence, read N- to C-terminus: Beta-1,4-glucuronyltransferase 1 (415 aa).

Residues 1–8 are Cytoplasmic-facing; that stretch reads MQMSYAIR. Residues 9–36 traverse the membrane as a helical; Signal-anchor for type II membrane protein segment; sequence CAFYQLLLAALMLVAMLQLLYLSLLSGL. Over 37 to 415 the chain is Lumenal; it reads HGQEEQDQYF…AKYPNSPRRC (379 aa). The N-linked (GlcNAc...) asparagine glycan is linked to N204. Residues D227 and D229 each contribute to the Mn(2+) site. A glycan (N-linked (GlcNAc...) asparagine) is linked at N300.

Belongs to the glycosyltransferase 49 family. Interacts with LARGE1 and LARGE2. Requires Mn(2+) as cofactor. In terms of tissue distribution, in the adult, highly expressed in heart, brain, skeletal muscle and kidney and to a lesser extent in placenta, pancreas, spleen, prostate, testis, ovary, small intestine and colon. Very weak expression in lung, liver, thymus and peripheral blood leukocytes. In fetal highly expressed in brain and kidney and to a lesser extent in lung and liver.

The protein localises to the golgi apparatus membrane. It catalyses the reaction 3-O-[beta-D-Xyl-(1-&gt;4)-Rib-ol-P-Rib-ol-P-3-beta-D-GalNAc-(1-&gt;3)-beta-D-GlcNAc-(1-&gt;4)-(O-6-P-alpha-D-Man)]-Thr-[protein] + UDP-alpha-D-glucuronate = 3-O-[beta-D-GlcA-(1-&gt;3)-beta-D-Xyl-(1-&gt;4)-Rib-ol-P-Rib-ol-P-3-beta-D-GalNAc-(1-&gt;3)-beta-D-GlcNAc-(1-&gt;4)-(O-6-P-alpha-D-Man)]-Thr-[protein] + UDP + H(+). The protein operates within protein modification; protein glycosylation. Functionally, beta-1,4-glucuronyltransferase involved in O-mannosylation of alpha-dystroglycan (DAG1). Transfers a glucuronic acid (GlcA) residue onto a xylose (Xyl) acceptor to produce the glucuronyl-beta-1,4-xylose-beta disaccharide primer, which is further elongated by LARGE1, during synthesis of phosphorylated O-mannosyl glycan. Phosphorylated O-mannosyl glycan is a carbohydrate structure present in alpha-dystroglycan (DAG1), which is required for binding laminin G-like domain-containing extracellular proteins with high affinity. Required for axon guidance; via its function in O-mannosylation of alpha-dystroglycan (DAG1). This is Beta-1,4-glucuronyltransferase 1 from Homo sapiens (Human).